A 430-amino-acid chain; its full sequence is Enolase (430 aa).

Gln-163 serves as a coordination point for (2R)-2-phosphoglycerate. Glu-205 (proton donor) is an active-site residue. Asp-242, Glu-287, and Asp-314 together coordinate Mg(2+). (2R)-2-phosphoglycerate is bound by residues Lys-339, Arg-368, Ser-369, and Lys-390. The active-site Proton acceptor is the Lys-339.

Belongs to the enolase family. Mg(2+) serves as cofactor.

Its subcellular location is the cytoplasm. It is found in the secreted. The protein localises to the cell surface. It catalyses the reaction (2R)-2-phosphoglycerate = phosphoenolpyruvate + H2O. Its pathway is carbohydrate degradation; glycolysis; pyruvate from D-glyceraldehyde 3-phosphate: step 4/5. Catalyzes the reversible conversion of 2-phosphoglycerate (2-PG) into phosphoenolpyruvate (PEP). It is essential for the degradation of carbohydrates via glycolysis. In Bacillus cytotoxicus (strain DSM 22905 / CIP 110041 / 391-98 / NVH 391-98), this protein is Enolase.